The chain runs to 660 residues: Pseudouridylate synthase 7 homolog (660 aa).

Residues 1–99 form a disordered region; that stretch reads MEMTSTSLKR…EAGEEEEAES (99 aa). The residue at position 7 (Ser-7) is a Phosphoserine. Positions 22-32 are enriched in basic and acidic residues; it reads TPHDETKKQKV. Positions 76-99 are enriched in acidic residues; the sequence is QEEEEEEEEEDGLSEAGEEEEAES. Ser-126 bears the Phosphoserine mark. Asp-293 serves as the catalytic Nucleophile. Residues 369–579 form the TRUD domain; it reads GFINYYGMQR…SGAYRRIIIR (211 aa).

Belongs to the pseudouridine synthase TruD family. Interacts with SIRT1.

It is found in the nucleus. It catalyses the reaction a uridine in tRNA = a pseudouridine in tRNA. It carries out the reaction uridine(13) in tRNA = pseudouridine(13) in tRNA. The catalysed reaction is a uridine in mRNA = a pseudouridine in mRNA. Functionally, pseudouridylate synthase that catalyzes pseudouridylation of RNAs. Acts as a regulator of protein synthesis in embryonic stem cells by mediating pseudouridylation of RNA fragments derived from tRNAs (tRFs): pseudouridylated tRFs inhibit translation by targeting the translation initiation complex. Also catalyzes pseudouridylation of mRNAs: mediates pseudouridylation of mRNAs with the consensus sequence 5'-UGUAG-3'. Acts as a regulator of pre-mRNA splicing by mediating pseudouridylation of pre-mRNAs at locations associated with alternatively spliced regions. Pseudouridylation of pre-mRNAs near splice sites directly regulates mRNA splicing and mRNA 3'-end processing. In addition to mRNAs and tRNAs, binds other types of RNAs, such as snRNAs, Y RNAs and vault RNAs, suggesting that it can catalyze pseudouridylation of many RNA types. This chain is Pseudouridylate synthase 7 homolog, found in Mus musculus (Mouse).